The sequence spans 600 residues: Glutamine--fructose-6-phosphate aminotransferase [isomerizing] (600 aa).

Cysteine 2 serves as the catalytic Nucleophile; for GATase activity. The Glutamine amidotransferase type-2 domain maps to 2–217; that stretch reads CGIVGYIGQN…DKEIVLVSRN (216 aa). SIS domains are found at residues 283-422 and 452-590; these read IRTA…VKGL and LARD…VDKP. Lysine 595 (for Fru-6P isomerization activity) is an active-site residue.

As to quaternary structure, homodimer.

Its subcellular location is the cytoplasm. It carries out the reaction D-fructose 6-phosphate + L-glutamine = D-glucosamine 6-phosphate + L-glutamate. In terms of biological role, catalyzes the first step in hexosamine metabolism, converting fructose-6P into glucosamine-6P using glutamine as a nitrogen source. The polypeptide is Glutamine--fructose-6-phosphate aminotransferase [isomerizing] (Oceanobacillus iheyensis (strain DSM 14371 / CIP 107618 / JCM 11309 / KCTC 3954 / HTE831)).